Here is a 147-residue protein sequence, read N- to C-terminus: Large ribosomal subunit protein bL9 (147 aa).

This sequence belongs to the bacterial ribosomal protein bL9 family.

Binds to the 23S rRNA. This Clostridium acetobutylicum (strain ATCC 824 / DSM 792 / JCM 1419 / IAM 19013 / LMG 5710 / NBRC 13948 / NRRL B-527 / VKM B-1787 / 2291 / W) protein is Large ribosomal subunit protein bL9.